The sequence spans 116 residues: uncharacterized protein (116 aa).

This is an uncharacterized protein from Invertebrate iridescent virus 6 (IIV-6).